Here is a 198-residue protein sequence, read N- to C-terminus: MHYPEPITKLMDSFMKLPGIGPKSAARLAFYVLDMKEDDVLDFAKALVDAKRNLSFCSVCGHITDKDPCYICSDTSRDRSVICVVQESKDVIAMEKMRDFHGLYHVLHGTISPMDGIGPEDINIPDLLKRLQDDTIEEVILATNPNVEGEATAMYISRLLRPSGIKVTRIAHGLPVGGDLEYADEVTLSKAMEGRREV.

A C4-type zinc finger spans residues 57–72; it reads CSVCGHITDKDPCYIC. A Toprim domain is found at 80–175; sequence SVICVVQESK…KVTRIAHGLP (96 aa).

It belongs to the RecR family.

May play a role in DNA repair. It seems to be involved in an RecBC-independent recombinational process of DNA repair. It may act with RecF and RecO. The sequence is that of Recombination protein RecR from Listeria welshimeri serovar 6b (strain ATCC 35897 / DSM 20650 / CCUG 15529 / CIP 8149 / NCTC 11857 / SLCC 5334 / V8).